The following is a 1209-amino-acid chain: Calcium-activated potassium channel subunit alpha-1 (1209 aa).

The span at 1-26 shows a compositional bias: gly residues; it reads MANGGGGGGGGSSGSSGGGGGGGGGE. Disordered regions lie at residues 1-29 and 42-64; these read MANGGGGGGGGSSGSSGGGGGGGGGETAL and LDASSSSSSSSSSSSSSSSSVHE. Residues 1 to 87 are Extracellular-facing; the sequence is MANGGGGGGG…VPCDSRGQRM (87 aa). The segment covering 45–61 has biased composition (low complexity); it reads SSSSSSSSSSSSSSSSS. A helical membrane pass occupies residues 88 to 108; it reads WWAFLASSMVTFFGGLFIILL. Residues 109-179 are Cytoplasmic-facing; the sequence is WRTLKYLWTV…MISAQTLTGR (71 aa). S-palmitoyl cysteine attachment occurs at residues Cys-119, Cys-120, and Cys-122. Residues 180–200 form a helical membrane-spanning segment; that stretch reads VLVVLVFALSIGALVIYFIDS. At 201–215 the chain is on the extracellular side; it reads SNPIESCQNFYKDFT. The helical transmembrane segment at 216–236 threads the bilayer; it reads LQIDMAFNVFFLLYFGLRFIA. The Cytoplasmic portion of the chain corresponds to 237–240; sequence ANDK. The helical transmembrane segment at 241–261 threads the bilayer; that stretch reads LWFWLEVNSVVDFFTVPPVFV. Residues 262-265 lie on the Extracellular side of the membrane; sequence SVYL. Residues 266–286 traverse the membrane as a helical; Voltage-sensor segment; that stretch reads NRSWLGLRFLRALRLIQFSEI. Residues 287–301 lie on the Cytoplasmic side of the membrane; it reads LQFLNILKTSNSIKL. A helical transmembrane segment spans residues 302 to 322; sequence VNLLSIFISTWLTAAGFIHLV. Over 323–336 the chain is Extracellular; it reads ENSGDPWENFQNNQ. An intramembrane region (pore-forming) is located at residues 337–359; sequence ALTYWECVYLLMVTMSTVGYGDV. The Selectivity for potassium signature appears at 353-356; sequence TVGY. Topologically, residues 360-368 are extracellular; sequence YAKTTLGRL. A helical membrane pass occupies residues 369-389; sequence FMVFFILGGLAMFASYVPEII. Topologically, residues 390-1209 are cytoplasmic; sequence ELIGNRKKYG…DKQKKEMVYR (820 aa). The 143-residue stretch at 408–550 folds into the RCK N-terminal 1 domain; it reads RKHIVVCGHI…WNWKEGDDAI (143 aa). 3 residues coordinate Mg(2+): Glu-440, Gln-463, and Glu-465. The segment S7 stretch occupies residues 557–577; that stretch reads LGFIAQSCLAQGLSTMLANLF. Positions 614-634 are segment S8; it reads LSFPTVCELCFVKLKLLMIAI. Positions 682–686 are heme-binding motif; the sequence is CKACH. A disordered region spans residues 704 to 734; the sequence is EDEQPPTLSPKKKQRNGGMRNSPNTSPKLMR. Thr-710 carries the post-translational modification Phosphothreonine. 3 positions are modified to phosphoserine: Ser-712, Ser-725, and Ser-729. The interval 784-804 is segment S9; it reads VLSGHVVVCIFGDVSSALIGL. Residues 786–930 form the RCK N-terminal 2 domain; the sequence is SGHVVVCIFG…MDRSSPDNSP (145 aa). At Thr-917 the chain carries Phosphothreonine. 2 positions are modified to phosphoserine: Ser-925 and Ser-929. Positions 977–999 match the Calcium bowl motif; sequence TELVNDTNVQFLDQDDDDDPDTE. The Ca(2+) site is built by Gln-986, Asp-989, Asp-992, and Asp-994. The segment S10 stretch occupies residues 1006–1026; the sequence is FACGTAFAVSVLDSLMSATYF. Positions 1160–1185 are enriched in low complexity; the sequence is RASLSHSSHSSQSSSKKSSSVHSIPS. Residues 1160–1209 are disordered; the sequence is RASLSHSSHSSQSSSKKSSSVHSIPSTANRPNRPKSRESRDKQKKEMVYR. Basic and acidic residues predominate over residues 1194–1209; the sequence is KSRESRDKQKKEMVYR. Residues Ser-1195 and Ser-1198 each carry the phosphoserine modification.

This sequence belongs to the potassium channel family. Calcium-activated (TC 1.A.1.3) subfamily. KCa1.1/KCNMA1 sub-subfamily. As to quaternary structure, homotetramer; which constitutes the calcium-activated potassium channel. Interacts with beta subunits KCNMB1, KCNMB2, KCNMB3 and KCNMB4. Interacts with gamma subunits LRRC26, LRRC38, LRRC52 and LRRC55. Beta and gamma subunits are accessory, and modulate its activity. Interacts with RAB11B. Post-translationally, phosphorylated. Phosphorylation by kinases such as PKA and/or PKG. In smooth muscles, phosphorylation affects its activity. Palmitoylation by ZDHHC22 and ZDHHC23 within the intracellular linker between the S0 and S1 transmembrane domains regulates localization to the plasma membrane. Depalmitoylated by LYPLA1 and LYPLAL1, leading to retard exit from the trans-Golgi network.

It localises to the cell membrane. The protein resides in the endoplasmic reticulum membrane. The catalysed reaction is K(+)(in) = K(+)(out). Ethanol and carbon monoxide-bound heme increase channel activation. Its activity is regulated as follows. Heme inhibits channel activation. Its function is as follows. Potassium channel activated by both membrane depolarization or increase in cytosolic Ca(2+) that mediates export of K(+). It is also activated by the concentration of cytosolic Mg(2+). Its activation dampens the excitatory events that elevate the cytosolic Ca(2+) concentration and/or depolarize the cell membrane. It therefore contributes to repolarization of the membrane potential. Plays a key role in controlling excitability in a number of systems, such as regulation of the contraction of smooth muscle, the tuning of hair cells in the cochlea, regulation of transmitter release, and innate immunity. In smooth muscles, its activation by high level of Ca(2+), caused by ryanodine receptors in the sarcoplasmic reticulum, regulates the membrane potential. In cochlea cells, its number and kinetic properties partly determine the characteristic frequency of each hair cell and thereby helps to establish a tonotopic map. Kinetics of KCNMA1 channels are determined by alternative splicing, phosphorylation status and its combination with modulating beta subunits. Highly sensitive to both iberiotoxin (IbTx) and charybdotoxin (CTX). Potassium channel activated by both membrane depolarization or increase in cytosolic Ca(2+) that mediates export of K(+). In Rattus norvegicus (Rat), this protein is Calcium-activated potassium channel subunit alpha-1 (Kcnma1).